Consider the following 216-residue polypeptide: ATP-dependent Clp protease proteolytic subunit (216 aa).

The active-site Nucleophile is the S120. Residue H145 is part of the active site.

It belongs to the peptidase S14 family. Fourteen ClpP subunits assemble into 2 heptameric rings which stack back to back to give a disk-like structure with a central cavity, resembling the structure of eukaryotic proteasomes.

It is found in the cytoplasm. It carries out the reaction Hydrolysis of proteins to small peptides in the presence of ATP and magnesium. alpha-casein is the usual test substrate. In the absence of ATP, only oligopeptides shorter than five residues are hydrolyzed (such as succinyl-Leu-Tyr-|-NHMec, and Leu-Tyr-Leu-|-Tyr-Trp, in which cleavage of the -Tyr-|-Leu- and -Tyr-|-Trp bonds also occurs).. Functionally, cleaves peptides in various proteins in a process that requires ATP hydrolysis. Has a chymotrypsin-like activity. Plays a major role in the degradation of misfolded proteins. The chain is ATP-dependent Clp protease proteolytic subunit from Cupriavidus necator (strain ATCC 17699 / DSM 428 / KCTC 22496 / NCIMB 10442 / H16 / Stanier 337) (Ralstonia eutropha).